A 357-amino-acid polypeptide reads, in one-letter code: Acyl-coenzyme A diphosphatase NUDT19 (357 aa).

The Nudix hydrolase domain maps to 10–242; the sequence is AATVMLAAGW…IWLAPPQFYE (233 aa). The short motif at 97–118 is the Nudix box element; that stretch reads AALPDDVALRICAIRETFEEAG. Glutamate 112 and glutamate 116 together coordinate Mg(2+). Lysine 300 carries the post-translational modification N6-succinyllysine. The short motif at 355 to 357 is the Microbody targeting signal element; it reads ARL.

It belongs to the Nudix hydrolase family. Monomer. Mg(2+) is required as a cofactor. Requires Mn(2+) as cofactor.

The protein localises to the peroxisome. The enzyme catalyses an acyl-CoA + H2O = an acyl-4'-phosphopantetheine + adenosine 3',5'-bisphosphate + 2 H(+). It carries out the reaction CoA + H2O = (R)-4'-phosphopantetheine + adenosine 3',5'-bisphosphate + 2 H(+). The catalysed reaction is hexanoyl-CoA + H2O = hexanoyl-4'-phosphopantetheine + adenosine 3',5'-bisphosphate + 2 H(+). It catalyses the reaction octanoyl-CoA + H2O = S-octanoyl-4'-phosphopantetheine + adenosine 3',5'-bisphosphate + 2 H(+). The enzyme catalyses butanoyl-CoA + H2O = S-butanoyl-4'-phosphopantetheine + adenosine 3',5'-bisphosphate + 2 H(+). It carries out the reaction propanoyl-CoA + H2O = propanoyl-4'-phosphopantetheine + adenosine 3',5'-bisphosphate + 2 H(+). The catalysed reaction is malonyl-CoA + H2O = malonyl-4'-phosphopantetheine + adenosine 3',5'-bisphosphate + 2 H(+). It catalyses the reaction succinyl-CoA + H2O = succinyl-4'-phosphopantetheine + adenosine 3',5'-bisphosphate + 2 H(+). The enzyme catalyses choloyl-CoA + H2O = S-choloyl-4'-phosphopantetheine + adenosine 3',5'-bisphosphate + 2 H(+). It carries out the reaction 4,8-dimethylnonanoyl-CoA + H2O = S-(4,8-dimethylnonanoyl)-4'-phosphopantetheine + adenosine 3',5'-bisphosphate + 2 H(+). The catalysed reaction is (9Z,12Z,15Z)-octadecatrienoyl-CoA + H2O = S-(9Z,12Z,15Z-octadecatrienoyl)-4'-phosphopantetheine + adenosine 3',5'-bisphosphate + 2 H(+). It catalyses the reaction (9Z,12Z)-octadecadienoyl-CoA + H2O = S-(9Z,12Z-octadecadienoyl)-4'-phosphopantetheine + adenosine 3',5'-bisphosphate + 2 H(+). The enzyme catalyses (9Z)-hexadecenoyl-CoA + H2O = S-(9Z-hexadecenoyl)-4'-phosphopantetheine + adenosine 3',5'-bisphosphate + 2 H(+). It carries out the reaction (9Z)-tetradecenoyl-CoA + H2O = S-(9Z-tetradecenoyl)-4'-phosphopantetheine + adenosine 3',5'-bisphosphate + 2 H(+). The catalysed reaction is (6Z)-octenoyl-CoA + H2O = S-(6Z-octenoyl)-4'-phosphopantetheine + adenosine 3',5'-bisphosphate + 2 H(+). It catalyses the reaction hexadecanoyl-CoA + H2O = S-hexadecanoyl-4'-phosphopantetheine + adenosine 3',5'-bisphosphate + 2 H(+). The enzyme catalyses tetradecanoyl-CoA + H2O = tetradecanoyl-4'-phosphopantetheine + adenosine 3',5'-bisphosphate + 2 H(+). It carries out the reaction dodecanoyl-CoA + H2O = S-dodecanoyl-4'-phosphopantetheine + adenosine 3',5'-bisphosphate + 2 H(+). The catalysed reaction is a 5'-end CoA-ribonucleoside in mRNA + H2O = a 5'-end phospho-adenosine-phospho-ribonucleoside in mRNA + (R)-4'-phosphopantetheine + 2 H(+). Its function is as follows. Fatty acyl-coenzyme A (CoA) diphosphatase that hydrolyzes fatty acyl-CoA to yield acyl-4'-phosphopantetheine and adenosine 3',5'-bisphosphate. Mediates the hydrolysis of a wide range of CoA esters, including choloyl-CoA and branched-chain fatty-acyl-CoA esters and at low substrate concentrations medium and long-chain fatty-acyl-CoA esters are the primary substrates. Highest activity seen with medium-chain acyl-CoA esters and higher rates of activity seen with the unsaturated acyl-CoA esters compared with the saturated esters. Exhibits decapping activity towards dpCoA-capped RNAs in vitro. In Rattus norvegicus (Rat), this protein is Acyl-coenzyme A diphosphatase NUDT19 (Nudt19).